We begin with the raw amino-acid sequence, 264 residues long: Transmembrane protein 41A (264 aa).

The first 17 residues, 1-17 (MHSLLGLLLVFAGSTFA), serve as a signal peptide directing secretion. Transmembrane regions (helical) follow at residues 67-87 (VYVFLLFCSAYLYKQSFAIPG), 90-110 (FLNVLAGALFGPWLGLLLCCV), 153-173 (LFFFLLFLRLFPMTPNWFLNL), 175-195 (APILNIPIVQFFFSVLIGLIP), and 219-239 (WETAFKLLAIALVALVPGTLI). The VTT domain stretch occupies residues 96–207 (GALFGPWLGL…FICVQTGSIL (112 aa)).

This sequence belongs to the TMEM41 family.

It is found in the membrane. This chain is Transmembrane protein 41A (TMEM41A), found in Bos taurus (Bovine).